The sequence spans 286 residues: Probable endonuclease 4 (286 aa).

Positions 71, 111, 147, 181, 184, 218, 231, 233, and 263 each coordinate Zn(2+).

Belongs to the AP endonuclease 2 family. Zn(2+) serves as cofactor.

The enzyme catalyses Endonucleolytic cleavage to 5'-phosphooligonucleotide end-products.. In terms of biological role, endonuclease IV plays a role in DNA repair. It cleaves phosphodiester bonds at apurinic or apyrimidinic (AP) sites, generating a 3'-hydroxyl group and a 5'-terminal sugar phosphate. This chain is Probable endonuclease 4, found in Vibrio cholerae serotype O1 (strain ATCC 39541 / Classical Ogawa 395 / O395).